The chain runs to 94 residues: Protein RESPONSE TO LOW SULFUR 2 (94 aa).

The stretch at 15 to 63 (VDELRRKNGEMEKAVEEMKKEMLQLWRRTQVAEEAEERLCSQLAELEAE) forms a coiled coil.

May be involved in defense responses monitoring. Probably implicated into osmotic stress signaling. The protein is Protein RESPONSE TO LOW SULFUR 2 of Arabidopsis thaliana (Mouse-ear cress).